The chain runs to 395 residues: Nitrite extrusion protein (395 aa).

12 helical membrane passes run 15-35 (SLVAGFMVWVLISSLISQITL), 44-64 (ISLVTAIPVILGSLLRIPLGY), 73-93 (LMFMVSFILLLFPVFWISIAD), 96-116 (FDLIAGGFFLGIGGAVFSIGV), 133-153 (GIYGAGNIGTAVTTFAAPVIA), 160-180 (STVQMYLILLAVFALLHVLFG), 203-223 (VLWFLSLFYFITFGAFVAFTI), 240-262 (AGLRTAGFIAVSTLLRPAGGFLA), 271-291 (LMFVFAGLTLSGIILSFSPTI), 293-313 (LYTFGSLTVAVCSGIGNGTVF), 330-350 (IVSAMGGLGGFFPPLILASVF), and 357-377 (AIGFMALSEVALASFVLVIWM).

It belongs to the major facilitator superfamily. Nitrate/nitrite porter (TC 2.A.1.8) family.

The protein resides in the cell membrane. Functionally, involved in excretion of nitrite produced by the dissimilatory reduction of nitrate. The sequence is that of Nitrite extrusion protein (narK) from Bacillus subtilis (strain 168).